We begin with the raw amino-acid sequence, 513 residues long: E3 ubiquitin-protein ligase XBAT33 (513 aa).

5 ANK repeats span residues G44–S73, C77–R106, A111–K140, G171–A200, and A214–L244. An RING-type zinc finger spans residues C312–R362. Disordered stretches follow at residues D397–R417 and H455–Q483. Basic and acidic residues-rich tracts occupy residues H455–E466 and T474–Q483.

It catalyses the reaction S-ubiquitinyl-[E2 ubiquitin-conjugating enzyme]-L-cysteine + [acceptor protein]-L-lysine = [E2 ubiquitin-conjugating enzyme]-L-cysteine + N(6)-ubiquitinyl-[acceptor protein]-L-lysine.. Its pathway is protein modification; protein ubiquitination. In terms of biological role, possesses E3 ubiquitin-protein ligase activity when associated with the E2 enzyme UBC8 in vitro. The chain is E3 ubiquitin-protein ligase XBAT33 (XBAT33) from Arabidopsis thaliana (Mouse-ear cress).